A 400-amino-acid polypeptide reads, in one-letter code: Probable tRNA sulfurtransferase (400 aa).

The THUMP domain maps to 60-164 (EPIIEKLKNV…KEATYITSGT (105 aa)). ATP is bound by residues 182 to 183 (LL), 207 to 208 (HF), arginine 264, glycine 286, and glutamine 295.

The protein belongs to the ThiI family.

It is found in the cytoplasm. It catalyses the reaction [ThiI sulfur-carrier protein]-S-sulfanyl-L-cysteine + a uridine in tRNA + 2 reduced [2Fe-2S]-[ferredoxin] + ATP + H(+) = [ThiI sulfur-carrier protein]-L-cysteine + a 4-thiouridine in tRNA + 2 oxidized [2Fe-2S]-[ferredoxin] + AMP + diphosphate. The enzyme catalyses [ThiS sulfur-carrier protein]-C-terminal Gly-Gly-AMP + S-sulfanyl-L-cysteinyl-[cysteine desulfurase] + AH2 = [ThiS sulfur-carrier protein]-C-terminal-Gly-aminoethanethioate + L-cysteinyl-[cysteine desulfurase] + A + AMP + 2 H(+). Its pathway is cofactor biosynthesis; thiamine diphosphate biosynthesis. Its function is as follows. Catalyzes the ATP-dependent transfer of a sulfur to tRNA to produce 4-thiouridine in position 8 of tRNAs, which functions as a near-UV photosensor. Also catalyzes the transfer of sulfur to the sulfur carrier protein ThiS, forming ThiS-thiocarboxylate. This is a step in the synthesis of thiazole, in the thiamine biosynthesis pathway. The sulfur is donated as persulfide by IscS. The polypeptide is Probable tRNA sulfurtransferase (Oceanobacillus iheyensis (strain DSM 14371 / CIP 107618 / JCM 11309 / KCTC 3954 / HTE831)).